The sequence spans 103 residues: Small ribosomal subunit protein uS10 (103 aa).

This sequence belongs to the universal ribosomal protein uS10 family. As to quaternary structure, part of the 30S ribosomal subunit.

Functionally, involved in the binding of tRNA to the ribosomes. The sequence is that of Small ribosomal subunit protein uS10 from Saccharophagus degradans (strain 2-40 / ATCC 43961 / DSM 17024).